Here is a 60-residue protein sequence, read N- to C-terminus: Ribosome modulation factor (60 aa).

This sequence belongs to the ribosome modulation factor family.

It is found in the cytoplasm. During stationary phase, converts 70S ribosomes to an inactive dimeric form (100S ribosomes). The protein is Ribosome modulation factor of Kangiella koreensis (strain DSM 16069 / JCM 12317 / KCTC 12182 / SW-125).